The sequence spans 1499 residues: Phospholipid-transporting ATPase VA (1499 aa).

The interval 1–53 (MEREPAGTEEPGPPGRRRRREGRTRTVRSNLLPPPGAEDPAAGAAKGERRRRR) is disordered. The Cytoplasmic segment spans residues 1 to 86 (MEREPAGTEE…KNLFEQFHRP (86 aa)). Over residues 15–26 (GRRRRREGRTRT) the composition is skewed to basic residues. Residues 87-106 (ANVYFVFIALLNFVPAVNAF) traverse the membrane as a helical segment. The Exoplasmic loop segment spans residues 107–110 (QPGL). A helical transmembrane segment spans residues 111–128 (ALAPVLFILAITAFRDLW). The Cytoplasmic segment spans residues 129–309 (EDYSRHRSDH…SKLERQMNCD (181 aa)). A helical transmembrane segment spans residues 310–332 (VLWCVLLLVCMSLFSAVGHGLWI). Residues 333–362 (WRYQEKKSLFYVPKSDGSSLSPVTAAVYSF) lie on the Exoplasmic loop side of the membrane. The chain crosses the membrane as a helical span at residues 363–384 (LTMIIVLQVLIPISLYVSIEIV). The Cytoplasmic segment spans residues 385–1087 (KACQVYFINQ…GHWCYSRLAN (703 aa)). Asp427 functions as the 4-aspartylphosphate intermediate in the catalytic mechanism. ATP contacts are provided by Asp427, Lys428, and Thr429. Residue Asp427 coordinates Mg(2+). Thr429 contacts Mg(2+). The disordered stretch occupies residues 464-531 (ADSEEEEVVP…AFSSPMEKDI (68 aa)). The residue at position 466 (Ser466) is a Phosphoserine. The segment covering 477-499 (SVSQRGSIGSHQSVRVVHRTQST) has biased composition (polar residues). The ATP site is built by Glu700, Phe742, Lys766, Arg809, Thr889, Gly890, Asp891, Arg1005, and Lys1011. A Mg(2+)-binding site is contributed by Asp1031. ATP contacts are provided by Asn1034 and Asp1035. Asp1035 contacts Mg(2+). A helical transmembrane segment spans residues 1088–1108 (MVLYFFYKNTMFVGLLFWFQF). The Exoplasmic loop segment spans residues 1109-1119 (FCGFSASTMID). Residues 1120 to 1140 (QWYLIFFNLLFSSLPPLVTGV) form a helical membrane-spanning segment. Residues 1141–1170 (LDRDVPANVLLTNPQLYKSGQNMEEYRPRT) are Cytoplasmic-facing. A helical membrane pass occupies residues 1171-1192 (FWFNMADAAFQSLVCFSIPYLA). Residues 1193–1199 (YYDSNVD) are Exoplasmic loop-facing. A helical transmembrane segment spans residues 1200–1222 (LFTWGTPIVTIALLTFLLHLGIE). At 1223–1228 (TKTWTW) the chain is on the cytoplasmic side. Residues 1229 to 1249 (LNWITCGFSVLLFFTVALIYN) form a helical membrane-spanning segment. Residues 1250 to 1267 (ASCATCYPPSNPYWTMQA) are Exoplasmic loop-facing. The chain crosses the membrane as a helical span at residues 1268 to 1292 (LLGDPVFYLTCLMTPVAALLPRLFF). Topologically, residues 1293-1499 (RSLQGRVFPT…LIGASSRRSQ (207 aa)) are cytoplasmic. Disordered stretches follow at residues 1311-1356 (TRKS…PSWH) and 1464-1499 (DGQA…RRSQ). A compositionally biased stretch (basic and acidic residues) spans 1330-1340 (LPKDSGTEHSS). Positions 1341–1356 (GRTVKTSVPLSQPSWH) are enriched in polar residues.

This sequence belongs to the cation transport ATPase (P-type) (TC 3.A.3) family. Type IV subfamily. In terms of assembly, component of a P4-ATPase flippase complex which consists of a catalytic alpha subunit ATP10A and an accessory beta subunit TMEM30A. Mg(2+) is required as a cofactor. Post-translationally, autophosphorylated at the conserved aspartate of the P-type ATPase signature sequence. In terms of tissue distribution, widely expressed, with highest levels in kidney, followed by lung, brain, prostate, testis, ovary and small intestine.

The protein localises to the cell membrane. It localises to the endoplasmic reticulum membrane. It catalyses the reaction ATP + H2O + phospholipidSide 1 = ADP + phosphate + phospholipidSide 2.. It carries out the reaction a 1,2-diacyl-sn-glycero-3-phosphocholine(out) + ATP + H2O = a 1,2-diacyl-sn-glycero-3-phosphocholine(in) + ADP + phosphate + H(+). The catalysed reaction is a beta-D-glucosyl-(1&lt;-&gt;1')-N-acylsphing-4-enine(out) + ATP + H2O = a beta-D-glucosyl-(1&lt;-&gt;1')-N-acylsphing-4-enine(in) + ADP + phosphate + H(+). With respect to regulation, inhibited under hypotonic conditions. In terms of biological role, catalytic component of P4-ATPase flippase complex, which catalyzes the hydrolysis of ATP coupled to the transport of phosphatidylcholine (PC) from the outer to the inner leaflet of the plasma membrane. Initiates inward plasma membrane bending and recruitment of Bin/amphiphysin/Rvs (BAR) domain-containing proteins involved in membrane tubulation and cell trafficking. Facilitates ITGB1/beta1 integrin endocytosis, delaying cell adhesion and cell spreading on extracellular matrix. Has low flippase activity toward glucosylceramide (GlcCer). The sequence is that of Phospholipid-transporting ATPase VA from Homo sapiens (Human).